The following is a 1104-amino-acid chain: Mitogen-activated protein kinase kinase kinase 9 (1104 aa).

Over residues 12 to 22 (ASAAAAAPPGE) the composition is skewed to low complexity. Positions 12–47 (ASAAAAAPPGEDGAGAGAEEEEEEEEEAAAAVGPGE) are disordered. The span at 29 to 39 (AEEEEEEEEEA) shows a compositional bias: acidic residues. An SH3 domain is found at 52–116 (APLPYWTAVF…PSNYVTPRSA (65 aa)). A Protein kinase domain is found at 144–412 (LTLEEIIGIG…LTTIEESGFF (269 aa)). Residues 150-158 (IGIGGFGKV) and K171 each bind ATP. The active-site Proton acceptor is D268. Phosphothreonine; by autocatalysis occurs at positions 304 and 305. Position 308 is a phosphoserine; by autocatalysis (S308). T312 carries the post-translational modification Phosphothreonine; by autocatalysis. Leucine-zipper regions lie at residues 430 to 451 (IQEM…EEEL) and 465 to 486 (LRRR…ELNI). Disordered regions lie at residues 532–636 (ASPT…PHFH), 675–742 (MEDE…LKRG), 781–819 (EEPE…FKKE), and 890–1038 (RDPN…CFAS). S533 carries the post-translational modification Phosphoserine. Polar residues-rich tracts occupy residues 566–575 (PGESSKTWGR) and 723–739 (PVNS…TNSL). A compositionally biased stretch (basic and acidic residues) spans 785–797 (PPAREEKKRREGL). Over residues 893 to 910 (NQSLTPTHVTLTTPSQPS) the composition is skewed to polar residues. Positions 929 to 944 (SRSPSSNGLSPSPGAG) are enriched in low complexity. A compositionally biased stretch (polar residues) spans 1014–1038 (HARSTSPANSSSTETPSNLDSCFAS).

Belongs to the protein kinase superfamily. STE Ser/Thr protein kinase family. MAP kinase kinase kinase subfamily. In terms of assembly, homodimer. Mg(2+) is required as a cofactor. Autophosphorylation on serine and threonine residues within the activation loop plays a role in enzyme activation. Thr-312 is likely to be the main autophosphorylation site. Autophosphorylation also occurs on Thr-304 and Ser-308. In terms of tissue distribution, expressed in epithelial tumor cell lines of colonic, breast and esophageal origin.

It carries out the reaction L-seryl-[protein] + ATP = O-phospho-L-seryl-[protein] + ADP + H(+). The enzyme catalyses L-threonyl-[protein] + ATP = O-phospho-L-threonyl-[protein] + ADP + H(+). With respect to regulation, homodimerization via the leucine zipper domains is required for autophosphorylation of multiple sites in the activation loop and subsequent activation. Autophosphorylation at Thr-312 is the key step in activation of MAP3K9/MLK1 and is required for full phosphorylation. Autophosphorylation at Thr-304 and Ser-308 have been shown to be of secondary importance in the activation of MAP3K9/MLK1. CEP-1347 and many indolocarbazole analogs have been shown to act as inhibitors of MAP3K9/MLK1 activity. Functionally, serine/threonine kinase which acts as an essential component of the MAP kinase signal transduction pathway. Plays an important role in the cascades of cellular responses evoked by changes in the environment. Once activated, acts as an upstream activator of the MKK/JNK signal transduction cascade through the phosphorylation of MAP2K4/MKK4 and MAP2K7/MKK7 which in turn activate the JNKs. The MKK/JNK signaling pathway regulates stress response via activator protein-1 (JUN) and GATA4 transcription factors. Also plays a role in mitochondrial death signaling pathway, including the release cytochrome c, leading to apoptosis. In Homo sapiens (Human), this protein is Mitogen-activated protein kinase kinase kinase 9 (MAP3K9).